A 624-amino-acid chain; its full sequence is Protein POLLEN DEFECTIVE IN GUIDANCE 1 (624 aa).

Positions 20-63 (SFENDDTSIRRSSSDPITGNVASESPRDYGKRKRSKKKKKKVNQ) are disordered. The span at 33–42 (SDPITGNVAS) shows a compositional bias: polar residues. The segment covering 49 to 61 (GKRKRSKKKKKKV) has biased composition (basic residues). 6 helical membrane-spanning segments follow: residues 263–283 (VLID…LTVM), 305–325 (ASEL…ILLG), 391–411 (FVSD…ILLA), 413–433 (AITL…LLVS), 545–565 (LTFV…PVYA), and 578–598 (LWMV…KVLI).

The protein belongs to the TAPT1 family. Interacts with CRT3, but not with CRT1 or CNX. In terms of tissue distribution, expressed in inflorescences, siliques, roots and shoots. Expressed in early embryo, endosperm, mature pollen and pollen tubes, synergide cells and weakly in antipodal cells.

It localises to the membrane. Its subcellular location is the endoplasmic reticulum lumen. Functionally, probable component of the calreticulin 3 (CRT3) complex, acting probably as a co-chaperone involved in protein retention in the endoplasmic reticulum lumen. Required for micropylar pollen tube guidance. Plays an essential role in cell plate orientation or positioning in early embryo patterning. In Arabidopsis thaliana (Mouse-ear cress), this protein is Protein POLLEN DEFECTIVE IN GUIDANCE 1 (POD1).